The following is a 273-amino-acid chain: Secretory carrier-associated membrane protein 6 (273 aa).

The segment at Met1 to Glu69 is disordered. Topologically, residues Met1–Ala131 are cytoplasmic. The span at Asn20–Ser30 shows a compositional bias: gly residues. A coiled-coil region spans residues Arg68–Ala94. 4 helical membrane-spanning segments follow: residues Ser132–Ile152, Leu159–Tyr179, Phe194–Ala214, and Ile239–Ile259. Residues Gly260–Lys273 lie on the Cytoplasmic side of the membrane.

Belongs to the SCAMP family.

It is found in the cell membrane. The protein resides in the cytoplasmic vesicle. The protein localises to the secretory vesicle membrane. Its function is as follows. Probably involved in membrane trafficking. This chain is Secretory carrier-associated membrane protein 6 (SCAMP6), found in Oryza sativa subsp. japonica (Rice).